The chain runs to 199 residues: Carbon disulfide hydrolase (199 aa).

Zn(2+)-binding residues include Cys-36, His-91, and Cys-94.

Belongs to the beta-class carbonic anhydrase family. In terms of assembly, exists as both octamers and hexadecamers in solution. The hexadecameric homooligomer may form a catenane, through interactions of two interlocked octameric rings. Zn(2+) is required as a cofactor.

The enzyme catalyses carbon disulfide + 2 H2O = 2 hydrogen sulfide + CO2 + 2 H(+). It participates in sulfur metabolism; hydrogen sulfide biosynthesis. Catalyzes the conversion of carbon disulfide into hydrogen sulfide and carbon dioxide, with carbonyl sulfide as an intermediate. Likely plays a key role in sulfur metabolism that allows A.thiooxidans G8 to grow on carbon disulfide as the main carbon and energy source. Does not show carbonic anhydrase activity (hydration of CO(2) to carbonate). This is Carbon disulfide hydrolase from Acidithiobacillus thiooxidans (Thiobacillus thiooxidans).